Here is a 236-residue protein sequence, read N- to C-terminus: Phosphoribosylaminoimidazole-succinocarboxamide synthase (236 aa).

It belongs to the SAICAR synthetase family.

It catalyses the reaction 5-amino-1-(5-phospho-D-ribosyl)imidazole-4-carboxylate + L-aspartate + ATP = (2S)-2-[5-amino-1-(5-phospho-beta-D-ribosyl)imidazole-4-carboxamido]succinate + ADP + phosphate + 2 H(+). Its pathway is purine metabolism; IMP biosynthesis via de novo pathway; 5-amino-1-(5-phospho-D-ribosyl)imidazole-4-carboxamide from 5-amino-1-(5-phospho-D-ribosyl)imidazole-4-carboxylate: step 1/2. This Coprothermobacter proteolyticus (strain ATCC 35245 / DSM 5265 / OCM 4 / BT) protein is Phosphoribosylaminoimidazole-succinocarboxamide synthase.